The following is a 153-amino-acid chain: Flagellar assembly factor FliW (153 aa).

The protein belongs to the FliW family. Interacts with translational regulator CsrA and flagellin(s).

The protein localises to the cytoplasm. In terms of biological role, acts as an anti-CsrA protein, binds CsrA and prevents it from repressing translation of its target genes, one of which is flagellin. Binds to flagellin and participates in the assembly of the flagellum. The polypeptide is Flagellar assembly factor FliW (Leptospira biflexa serovar Patoc (strain Patoc 1 / Ames)).